The following is a 417-amino-acid chain: Serpin H1 (417 aa).

The N-terminal stretch at 1–17 is a signal peptide; that stretch reads MRSLLLGTLCLLAVALA. Lysine 93 carries the N6-succinyllysine modification. N-linked (GlcNAc...) asparagine glycans are attached at residues asparagine 119 and asparagine 124. Serine 140 is modified (phosphoserine). At lysine 206 the chain carries N6-acetyllysine. N6-succinyllysine is present on lysine 295. Lysine 318 carries the post-translational modification N6-acetyllysine. Asparagine 394 carries N-linked (GlcNAc...) asparagine glycosylation. Residues 414 to 417 carry the Prevents secretion from ER motif; the sequence is RDEL.

It belongs to the serpin family.

The protein localises to the endoplasmic reticulum lumen. Its function is as follows. Binds specifically to collagen. Could be involved as a chaperone in the biosynthetic pathway of collagen. This is Serpin H1 (Serpinh1) from Mus musculus (Mouse).